Reading from the N-terminus, the 274-residue chain is 2-dehydro-3-deoxyphosphooctonate aldolase (274 aa).

This sequence belongs to the KdsA family.

The protein resides in the cytoplasm. The catalysed reaction is D-arabinose 5-phosphate + phosphoenolpyruvate + H2O = 3-deoxy-alpha-D-manno-2-octulosonate-8-phosphate + phosphate. The protein operates within carbohydrate biosynthesis; 3-deoxy-D-manno-octulosonate biosynthesis; 3-deoxy-D-manno-octulosonate from D-ribulose 5-phosphate: step 2/3. It participates in bacterial outer membrane biogenesis; lipopolysaccharide biosynthesis. This chain is 2-dehydro-3-deoxyphosphooctonate aldolase, found in Rickettsia peacockii (strain Rustic).